Consider the following 145-residue polypeptide: Large ribosomal subunit protein uL15 (145 aa).

Residues 1–57 are disordered; it reads MKLNDLSPAPGSRREKHRPGRGIGSGLGKTGGRGHKGQTSRSGGTIAPGFEGGQQPL. Residues 21–31 are compositionally biased toward gly residues; sequence RGIGSGLGKTG.

This sequence belongs to the universal ribosomal protein uL15 family. Part of the 50S ribosomal subunit.

In terms of biological role, binds to the 23S rRNA. The chain is Large ribosomal subunit protein uL15 from Pseudomonas fluorescens (strain Pf0-1).